A 225-amino-acid polypeptide reads, in one-letter code: Ribonuclease 3 (225 aa).

In terms of domain architecture, RNase III spans 5–127 (LDRLQRSLGH…VFAATFLDQG (123 aa)). Glu-40 contacts Mg(2+). The active site involves Asp-44. Mg(2+) is bound by residues Asp-113 and Glu-116. Glu-116 is a catalytic residue. In terms of domain architecture, DRBM spans 154 to 224 (DPKTALQELL…AELALAQLRK (71 aa)).

The protein belongs to the ribonuclease III family. In terms of assembly, homodimer. Mg(2+) serves as cofactor.

The protein resides in the cytoplasm. The enzyme catalyses Endonucleolytic cleavage to 5'-phosphomonoester.. Its function is as follows. Digests double-stranded RNA. Involved in the processing of primary rRNA transcript to yield the immediate precursors to the large and small rRNAs (23S and 16S). Processes some mRNAs, and tRNAs when they are encoded in the rRNA operon. Processes pre-crRNA and tracrRNA of type II CRISPR loci if present in the organism. The chain is Ribonuclease 3 from Aromatoleum aromaticum (strain DSM 19018 / LMG 30748 / EbN1) (Azoarcus sp. (strain EbN1)).